Here is a 373-residue protein sequence, read N- to C-terminus: P2Y purinoceptor 1 (373 aa).

The Extracellular portion of the chain corresponds to 1-51 (MTEVLWPAVPNGTDTAFLADPGSPWGNSTVTSTAAVASPFKCALTKTGFQF). N-linked (GlcNAc...) asparagine glycans are attached at residues asparagine 11 and asparagine 27. Disulfide bonds link cysteine 42/cysteine 296 and cysteine 124/cysteine 202. Lysine 46 lines the ADP pocket. Residues 52-74 (YYLPAVYILVFIIGFLGNSVAIW) traverse the membrane as a helical segment. Residues 75-87 (MFVFHMKPWSGIS) are Cytoplasmic-facing. A helical transmembrane segment spans residues 88–109 (VYMFNLALADFLYVLTLPALIF). Topologically, residues 110–125 (YYFNKTDWIFGDAMCK) are extracellular. N-linked (GlcNAc...) asparagine glycosylation is present at asparagine 113. The chain crosses the membrane as a helical span at residues 126 to 147 (LQRFIFHVNLYGSILFLTCISA). Topologically, residues 148 to 166 (HRYSGVVYPLKSLGRLKKK) are cytoplasmic. A helical transmembrane segment spans residues 167-188 (NAVYISVLVWLIVVVGISPILF). Residues 189-214 (YSGTGIRKNKTITCYDTTSDEYLRSY) lie on the Extracellular side of the membrane. N-linked (GlcNAc...) asparagine glycosylation is present at asparagine 197. 203-205 (YDT) serves as a coordination point for ADP. Residues 215–237 (FIYSMCTTVAMFCVPLVLILGCY) form a helical membrane-spanning segment. Over 238–260 (GLIVRALIYKDLDNSPLRRKSIY) the chain is Cytoplasmic. Residues 261–284 (LVIIVLTVFAVSYIPFHVMKTMNL) traverse the membrane as a helical segment. ADP contacts are provided by residues 283–287 (NLRAR), 303–306 (YATY), and arginine 310. The Extracellular portion of the chain corresponds to 285–303 (RARLDFQTPEMCAFNDRVY). Residues 304-325 (ATYQVTRGLASLNSCVDPILYF) traverse the membrane as a helical segment. Topologically, residues 326–373 (LAGDTFRRRLSRATRKASRRSEANLQSKSEDMTLNILSEFKQNGDTSL) are cytoplasmic.

The protein belongs to the G-protein coupled receptor 1 family.

The protein localises to the cell membrane. Its function is as follows. Receptor for extracellular adenine nucleotides such as ADP. In platelets, binding to ADP leads to mobilization of intracellular calcium ions via activation of phospholipase C, a change in platelet shape, and ultimately platelet aggregation. The chain is P2Y purinoceptor 1 (P2RY1) from Bos taurus (Bovine).